Here is a 203-residue protein sequence, read N- to C-terminus: Urease accessory protein UreE (203 aa).

The tract at residues 170–203 (EHHGHSHSHSHSHSHDHDHQHGPSCSHGHHHGHR) is disordered.

The protein belongs to the UreE family.

The protein localises to the cytoplasm. In terms of biological role, involved in urease metallocenter assembly. Binds nickel. Probably functions as a nickel donor during metallocenter assembly. The protein is Urease accessory protein UreE of Burkholderia mallei (strain SAVP1).